A 269-amino-acid polypeptide reads, in one-letter code: Imidazoleglycerol-phosphate dehydratase 3, chloroplastic (269 aa).

Residues 1–51 (MTTAPVVSPSLSRLHSAPASPFPKAPVGSGAGVAFPARPYGPSLRLRSAVM) constitute a chloroplast transit peptide. Residues Glu83, 109-117 (HMLDQLASH), 135-139 (HHSNE), Arg161, and Arg183 contribute to the substrate site. Residues His109, His135, His136, and Glu139 each contribute to the Mn(2+) site. The Mn(2+) site is built by His207, His231, His232, and Glu235. Substrate is bound by residues 231–239 (HHIIEATFK) and 261–263 (SSK).

The protein belongs to the imidazoleglycerol-phosphate dehydratase family. Mn(2+) serves as cofactor.

It is found in the plastid. Its subcellular location is the chloroplast. The enzyme catalyses D-erythro-1-(imidazol-4-yl)glycerol 3-phosphate = 3-(imidazol-4-yl)-2-oxopropyl phosphate + H2O. The protein operates within amino-acid biosynthesis; L-histidine biosynthesis; L-histidine from 5-phospho-alpha-D-ribose 1-diphosphate: step 6/9. The sequence is that of Imidazoleglycerol-phosphate dehydratase 3, chloroplastic from Triticum aestivum (Wheat).